Consider the following 596-residue polypeptide: MTQSDHRHTRPSSYGGTVLTQRVSQATVEDSRPLRGWQRRAMVKYLASQPRDFLAVATPGSGKTTFALRVMTELLNSHAVEQVTVVVPTEHLKVQWTRAAATHGLALDPKFSNTNPRTSPEYHGVTMTYAQVAAHPTLHRVRTEGRRTLVIFDEIHHGGNAKAWGDAIREAFSDATRRLALTGTPFRSDDKPIPFVTYALDADGLMHSQADHTYSYAEGLADGVVRPVVFLVYSGQARWRNSAGEEHAARLGEPLSAEQTARAWRTALDPSGEWMPAVISAADQRLRQLRTHVPDAGGMIIASDQTAARAYANLLAQMTSETPTLVLSDDPGSSARITEFAKNTSQWLIAVRMVSEGVDIPRLSVGIYATSASTPLFFAQAIGRFVRSRHPGETASIFVPSVPNLLQLASELETQRNHVLGKPHRESTDNPLGGNPATMTQTEQDDTEKYFTAIGADAELDQIIFDGSSFGTATPAGSEEEAYYLGIPGLLDADQMRALLHRRQNEQLQKRTAAQQASSTPDRTSGAPASVHGQLRELRRELNSLVSIAHHHTGKPHGWIHNELRRRCGGPPIAAATHDQLKARIDAVRQLNAEPS.

Residues 44 to 203 (KYLASQPRDF…PFVTYALDAD (160 aa)) form the Helicase ATP-binding domain. The region spanning 285-432 (RLRQLRTHVP…PHRESTDNPL (148 aa)) is the Helicase C-terminal domain. Disordered stretches follow at residues 420–444 (LGKPHRESTDNPLGGNPATMTQTEQ) and 506–533 (EQLQKRTAAQQASSTPDRTSGAPASVHG). A compositionally biased stretch (polar residues) spans 510–523 (KRTAAQQASSTPDR).

To M.tuberculosis Rv2917.

This is an uncharacterized protein from Mycobacterium leprae (strain TN).